A 38-amino-acid chain; its full sequence is uncharacterized protein (38 aa).

This is an uncharacterized protein from Archaeoglobus fulgidus (strain ATCC 49558 / DSM 4304 / JCM 9628 / NBRC 100126 / VC-16).